Consider the following 630-residue polypeptide: Probable potassium transport system protein Kup (630 aa).

A run of 12 helical transmembrane segments spans residues 17–37, 51–71, 105–125, 144–164, 175–195, 218–238, 255–275, 283–303, 344–364, 374–394, 402–422, and 428–448; these read LAIA…LYSL, PSAI…VVGI, ITGL…GDAV, PQLS…LFWI, LFGP…IYHI, VLLA…AEAL, YVLV…LLLL, PFFL…STVA, IYVP…VIGF, YGIA…VVMV, LLVA…FGAN, and QGGW…MTWY.

The protein belongs to the HAK/KUP transporter (TC 2.A.72) family.

The protein localises to the cell inner membrane. The catalysed reaction is K(+)(in) + H(+)(in) = K(+)(out) + H(+)(out). Transport of potassium into the cell. Likely operates as a K(+):H(+) symporter. The polypeptide is Probable potassium transport system protein Kup (Burkholderia mallei (strain NCTC 10247)).